Reading from the N-terminus, the 297-residue chain is Probable lipid kinase YegS-like (297 aa).

The DAGKc domain maps to 2-131; the sequence is STFPASLLIL…IDIARVNDKT (130 aa). ATP contacts are provided by residues Thr-40, 66 to 72, and Thr-93; that span reads GDGTINE. Leu-213, Asp-216, and Leu-218 together coordinate Mg(2+). Glu-269 serves as the catalytic Proton acceptor.

The protein belongs to the diacylglycerol/lipid kinase family. YegS lipid kinase subfamily. Mg(2+) is required as a cofactor. The cofactor is Ca(2+).

Its subcellular location is the cytoplasm. Its function is as follows. Probably phosphorylates lipids; the in vivo substrate is unknown. This chain is Probable lipid kinase YegS-like, found in Klebsiella pneumoniae (strain 342).